Reading from the N-terminus, the 236-residue chain is Ribosome assembly factor mrt4 (236 aa).

It belongs to the universal ribosomal protein uL10 family. In terms of assembly, associates with the pre-60S ribosomal particle.

It localises to the nucleus. It is found in the nucleolus. The protein localises to the cytoplasm. Functionally, component of the ribosome assembly machinery. Nuclear paralog of the ribosomal protein P0, it binds pre-60S subunits at an early stage of assembly in the nucleolus, and is replaced by P0 in cytoplasmic pre-60S subunits and mature 80S ribosomes. This is Ribosome assembly factor mrt4 from Eremothecium gossypii (strain ATCC 10895 / CBS 109.51 / FGSC 9923 / NRRL Y-1056) (Yeast).